A 442-amino-acid chain; its full sequence is Exodeoxyribonuclease 7 large subunit (442 aa).

This sequence belongs to the XseA family. As to quaternary structure, heterooligomer composed of large and small subunits.

It is found in the cytoplasm. It catalyses the reaction Exonucleolytic cleavage in either 5'- to 3'- or 3'- to 5'-direction to yield nucleoside 5'-phosphates.. In terms of biological role, bidirectionally degrades single-stranded DNA into large acid-insoluble oligonucleotides, which are then degraded further into small acid-soluble oligonucleotides. The protein is Exodeoxyribonuclease 7 large subunit of Shewanella sediminis (strain HAW-EB3).